A 592-amino-acid chain; its full sequence is Inactive heparanase-2 (592 aa).

The signal sequence occupies residues Met1–Ala41. Residues Asn254 and Asn392 are each glycosylated (N-linked (GlcNAc...) asparagine).

Belongs to the glycosyl hydrolase 79 family. Interacts with HPSE. Interacts with SDC1 (via glycan chains). Widely expressed, with the highest expression in brain, mammary gland, prostate, small intestine, testis and uterus. In the central nervous system, expressed in the spinal cord, caudate nucleus, thalamus, substantia nigra, medulla oblongata, putamen and pons. In the urinary bladder, expressed in longitudinal and circular layers of detrusor muscle. Found both in normal and cancer tissues.

It is found in the secreted. It localises to the extracellular space. The protein localises to the extracellular matrix. Functionally, binds heparin and heparan sulfate with high affinity, but lacks heparanase activity. Inhibits HPSE, possibly by competing for its substrates (in vitro). The chain is Inactive heparanase-2 (HPSE2) from Homo sapiens (Human).